Here is a 596-residue protein sequence, read N- to C-terminus: Cell adhesion molecule CEACAM20 (596 aa).

An N-terminal signal peptide occupies residues 1–30; sequence MGPADSWGHHWMGILLSASLCTVWSPPAAA. Residues 31–450 are Extracellular-facing; sequence QLTLNANPLD…SSLSSGAIAG (420 aa). Ig-like C2-type domains follow at residues 58-154, 160-246, 256-341, and 346-432; these read PQIH…PIFL, PDPV…GTLK, PQVV…LELT, and PDQV…TSVL. A disulfide bridge links cysteine 90 with cysteine 138. Residues asparagine 96 and asparagine 105 are each glycosylated (N-linked (GlcNAc...) asparagine). Cysteine 276 and cysteine 324 are oxidised to a cystine. 5 N-linked (GlcNAc...) asparagine glycosylation sites follow: asparagine 280, asparagine 306, asparagine 317, asparagine 368, and asparagine 415. A disulfide bridge links cysteine 375 with cysteine 416. The helical transmembrane segment at 451 to 471 threads the bilayer; sequence IVIGILAVIAVASELGYFLCI. Residues 472 to 585 are Cytoplasmic-facing; the sequence is RNARRPSRKT…SIYEELVNPE (114 aa). Disordered stretches follow at residues 477 to 510 and 527 to 563; these read PSRK…LSPE and QPPD…LMPP. The span at 501-510 shows a compositional bias: low complexity; it reads EPSSESLSPE. The span at 553 to 562 shows a compositional bias: pro residues; that stretch reads WKPPPKPLMP. A phosphotyrosine mark is found at tyrosine 578 and tyrosine 589.

This sequence belongs to the immunoglobulin superfamily. CEA family. In terms of assembly, interacts (via extracellular domain) with PTPRH (via extracellular domain); the interaction dephosphorylates CEACAM20. Interacts (phosphorylated form) with SYK (via SH2 domains); the interaction further enhances CEACAM20 phosphorylation. Phosphorylated on tyrosine residues by SYK, SRC and FYN in vitro.

The protein resides in the cell projection. Its subcellular location is the microvillus membrane. It is found in the apical cell membrane. Its function is as follows. Together with the tyrosine-protein kinase SYK, enhances production of the cytokine CXCL8/IL-8 via the NFKB pathway and may thus have a role in the intestinal immune response. This chain is Cell adhesion molecule CEACAM20, found in Homo sapiens (Human).